The chain runs to 126 residues: Fluoride-specific ion channel FluC (126 aa).

4 helical membrane passes run Phe5–Ile25, Thr39–Val59, Ile69–Thr89, and Ala103–Val123. 2 residues coordinate Na(+): Gly77 and Thr80.

The protein belongs to the fluoride channel Fluc/FEX (TC 1.A.43) family.

The protein resides in the cell inner membrane. It catalyses the reaction fluoride(in) = fluoride(out). Its activity is regulated as follows. Na(+) is not transported, but it plays an essential structural role and its presence is essential for fluoride channel function. In terms of biological role, fluoride-specific ion channel. Important for reducing fluoride concentration in the cell, thus reducing its toxicity. The protein is Fluoride-specific ion channel FluC of Nitrobacter winogradskyi (strain ATCC 25391 / DSM 10237 / CIP 104748 / NCIMB 11846 / Nb-255).